Consider the following 81-residue polypeptide: Antitoxin VapB28 (81 aa).

Its function is as follows. Antitoxin component of a type II toxin-antitoxin (TA) system. This is Antitoxin VapB28 (vapB28) from Mycobacterium tuberculosis (strain CDC 1551 / Oshkosh).